A 110-amino-acid polypeptide reads, in one-letter code: Putative UPF0377 protein YIR040C (110 aa).

It belongs to the UPF0377 family.

The polypeptide is Putative UPF0377 protein YIR040C (Saccharomyces cerevisiae (strain ATCC 204508 / S288c) (Baker's yeast)).